Consider the following 128-residue polypeptide: Large ribosomal subunit protein bL17 (128 aa).

Belongs to the bacterial ribosomal protein bL17 family. In terms of assembly, part of the 50S ribosomal subunit. Contacts protein L32.

The chain is Large ribosomal subunit protein bL17 from Baumannia cicadellinicola subsp. Homalodisca coagulata.